A 1056-amino-acid polypeptide reads, in one-letter code: Carbamoyl phosphate synthase large chain (1056 aa).

A carboxyphosphate synthetic domain region spans residues 1–401; the sequence is MPKRTDIHKI…ALHKAVRSLE (401 aa). The ATP site is built by Arg129, Arg169, Gly175, Gly176, Lys208, Ile210, Glu215, Gly241, Ile242, His243, Gln284, and Glu298. The ATP-grasp 1 domain occupies 133 to 327; the sequence is KELMNELGEP…IAKMAAKIAV (195 aa). Positions 284, 298, and 300 each coordinate Mg(2+). Positions 284, 298, and 300 each coordinate Mn(2+). Residues 402-546 form an oligomerization domain region; that stretch reads IDEKDLFSAE…YSAYDHENES (145 aa). A carbamoyl phosphate synthetic domain region spans residues 547–929; sequence QRTKKPSILV…ALHKAFSGAH (383 aa). The region spanning 671 to 861 is the ATP-grasp 2 domain; it reads DQVITDLNLK…MAQVATRVIL (191 aa). Positions 707, 746, 748, 752, 777, 778, 779, 780, 820, and 832 each coordinate ATP. Gln820, Glu832, and Asn834 together coordinate Mg(2+). Mn(2+) contacts are provided by Gln820, Glu832, and Asn834. Residues 930–1056 enclose the MGS-like domain; sequence IQVPNDGKIL…DQSLEAITIK (127 aa). Positions 930-1056 are allosteric domain; that stretch reads IQVPNDGKIL…DQSLEAITIK (127 aa).

This sequence belongs to the CarB family. In terms of assembly, composed of two chains; the small (or glutamine) chain promotes the hydrolysis of glutamine to ammonia, which is used by the large (or ammonia) chain to synthesize carbamoyl phosphate. Tetramer of heterodimers (alpha,beta)4. Mg(2+) serves as cofactor. It depends on Mn(2+) as a cofactor.

The catalysed reaction is hydrogencarbonate + L-glutamine + 2 ATP + H2O = carbamoyl phosphate + L-glutamate + 2 ADP + phosphate + 2 H(+). It carries out the reaction hydrogencarbonate + NH4(+) + 2 ATP = carbamoyl phosphate + 2 ADP + phosphate + 2 H(+). Its pathway is amino-acid biosynthesis; L-arginine biosynthesis; carbamoyl phosphate from bicarbonate: step 1/1. It functions in the pathway pyrimidine metabolism; UMP biosynthesis via de novo pathway; (S)-dihydroorotate from bicarbonate: step 1/3. In terms of biological role, large subunit of the glutamine-dependent carbamoyl phosphate synthetase (CPSase). CPSase catalyzes the formation of carbamoyl phosphate from the ammonia moiety of glutamine, carbonate, and phosphate donated by ATP, constituting the first step of 2 biosynthetic pathways, one leading to arginine and/or urea and the other to pyrimidine nucleotides. The large subunit (synthetase) binds the substrates ammonia (free or transferred from glutamine from the small subunit), hydrogencarbonate and ATP and carries out an ATP-coupled ligase reaction, activating hydrogencarbonate by forming carboxy phosphate which reacts with ammonia to form carbamoyl phosphate. The sequence is that of Carbamoyl phosphate synthase large chain from Limosilactobacillus reuteri (strain DSM 20016) (Lactobacillus reuteri).